The sequence spans 532 residues: Probable G-protein coupled receptor Mth-like 11 (532 aa).

Positions 1 to 20 are cleaved as a signal peptide; it reads MGMFRVEYLLLGILVIGVRS. The Extracellular portion of the chain corresponds to 21–229; the sequence is RDIPNCDFFD…VRKSRLSNAS (209 aa). Disulfide bonds link cysteine 26-cysteine 80, cysteine 82-cysteine 87, cysteine 91-cysteine 184, cysteine 92-cysteine 103, and cysteine 145-cysteine 204. N-linked (GlcNAc...) asparagine glycosylation is present at asparagine 42. N-linked (GlcNAc...) asparagine glycans are attached at residues asparagine 110, asparagine 123, asparagine 166, asparagine 195, and asparagine 227. Residues 230-250 form a helical membrane-spanning segment; the sequence is IPVKFSSVFFMVITIAAYLWL. Residues 251–262 are Cytoplasmic-facing; it reads PKFRSLHGKCCN. A helical membrane pass occupies residues 263–283; that stretch reads LYFICLAITFLLNVISLFGIF. The Extracellular segment spans residues 284 to 290; sequence ELKTPIC. Residues 291 to 311 traverse the membrane as a helical segment; it reads YLTGYAGYFTVMATFLWLSVI. Over 312-339 the chain is Cytoplasmic; sequence SFDVWRRFAMRKFQVFYKNKRSSFFNYN. Residues 340-360 traverse the membrane as a helical segment; it reads IIVWSSAGLLTCIIFLVDQFV. Topologically, residues 361–386 are extracellular; that stretch reads ETNLDNPYNPAVGVFSCWIFTNGWSA. The chain crosses the membrane as a helical span at residues 387 to 407; that stretch reads TFYFYAPLAILIILNCASFFL. The Cytoplasmic segment spans residues 408–439; the sequence is TTRYIYVENKQNQKVLNNSEPQKLSRNHANYR. The chain crosses the membrane as a helical span at residues 440-460; the sequence is IYFRLFIIMGGSWFLEIIAFI. Over 461 to 469 the chain is Extracellular; the sequence is CEMENMWKP. Residues 470 to 490 form a helical membrane-spanning segment; it reads LIILNDYINCSQGIIIFVATF. The Cytoplasmic segment spans residues 491-532; it reads CNHEMFRLIRKRIQNRNITSLELTNTSRPVESEKMADVELGK.

The protein belongs to the G-protein coupled receptor 2 family. Mth subfamily.

It localises to the cell membrane. This is Probable G-protein coupled receptor Mth-like 11 (mthl11) from Drosophila melanogaster (Fruit fly).